The following is a 216-amino-acid chain: Thiamine-phosphate synthase (216 aa).

Residues Gln-40 to Lys-44 and Asn-72 each bind 4-amino-2-methyl-5-(diphosphooxymethyl)pyrimidine. Asp-73 and Asp-92 together coordinate Mg(2+). Ser-111 serves as a coordination point for 4-amino-2-methyl-5-(diphosphooxymethyl)pyrimidine. A 2-[(2R,5Z)-2-carboxy-4-methylthiazol-5(2H)-ylidene]ethyl phosphate-binding site is contributed by Thr-137–Thr-139. Position 140 (Lys-140) interacts with 4-amino-2-methyl-5-(diphosphooxymethyl)pyrimidine. Residues Gly-169 and Val-189 to Ser-190 contribute to the 2-[(2R,5Z)-2-carboxy-4-methylthiazol-5(2H)-ylidene]ethyl phosphate site.

The protein belongs to the thiamine-phosphate synthase family. The cofactor is Mg(2+).

It catalyses the reaction 2-[(2R,5Z)-2-carboxy-4-methylthiazol-5(2H)-ylidene]ethyl phosphate + 4-amino-2-methyl-5-(diphosphooxymethyl)pyrimidine + 2 H(+) = thiamine phosphate + CO2 + diphosphate. It carries out the reaction 2-(2-carboxy-4-methylthiazol-5-yl)ethyl phosphate + 4-amino-2-methyl-5-(diphosphooxymethyl)pyrimidine + 2 H(+) = thiamine phosphate + CO2 + diphosphate. The catalysed reaction is 4-methyl-5-(2-phosphooxyethyl)-thiazole + 4-amino-2-methyl-5-(diphosphooxymethyl)pyrimidine + H(+) = thiamine phosphate + diphosphate. It participates in cofactor biosynthesis; thiamine diphosphate biosynthesis; thiamine phosphate from 4-amino-2-methyl-5-diphosphomethylpyrimidine and 4-methyl-5-(2-phosphoethyl)-thiazole: step 1/1. Functionally, condenses 4-methyl-5-(beta-hydroxyethyl)thiazole monophosphate (THZ-P) and 2-methyl-4-amino-5-hydroxymethyl pyrimidine pyrophosphate (HMP-PP) to form thiamine monophosphate (TMP). This Photorhabdus laumondii subsp. laumondii (strain DSM 15139 / CIP 105565 / TT01) (Photorhabdus luminescens subsp. laumondii) protein is Thiamine-phosphate synthase.